The chain runs to 679 residues: Methionine--tRNA ligase (679 aa).

A 'HIGH' region motif is present at residues 12-22; sequence PYANGPIHIGH. Zn(2+) contacts are provided by Cys143, Cys146, Cys156, and Cys158. The 'KMSKS' region motif lies at 328–332; it reads KMSKS. Lys331 is an ATP binding site. Residues 537–564 form a disordered region; that stretch reads MMEESKDEAAQETGAAATNPFNDSDQPL. In terms of domain architecture, tRNA-binding spans 577 to 679; it reads DFMKVDLRVA…EGALPGQRVH (103 aa).

Belongs to the class-I aminoacyl-tRNA synthetase family. MetG type 1 subfamily. As to quaternary structure, homodimer. Requires Zn(2+) as cofactor.

The protein resides in the cytoplasm. It carries out the reaction tRNA(Met) + L-methionine + ATP = L-methionyl-tRNA(Met) + AMP + diphosphate. Its function is as follows. Is required not only for elongation of protein synthesis but also for the initiation of all mRNA translation through initiator tRNA(fMet) aminoacylation. This Rhodopirellula baltica (strain DSM 10527 / NCIMB 13988 / SH1) protein is Methionine--tRNA ligase.